A 119-amino-acid polypeptide reads, in one-letter code: Protein MRP-126 (119 aa).

EF-hand domains follow at residues 23 to 58 and 59 to 94; these read DVFH…LKHV and KNQV…VTVA. Threonine 37, glutamate 42, aspartate 72, asparagine 74, aspartate 76, glutamine 78, and glutamate 83 together coordinate Ca(2+).

This sequence belongs to the S-100 family. As to expression, expressed in v-myb-transformed myelomonocytic cells.

The sequence is that of Protein MRP-126 from Gallus gallus (Chicken).